The chain runs to 567 residues: Cytochrome P450 monooxygenase 69 (567 aa).

A helical transmembrane segment spans residues 7-24 (ELAALTVVLLATGVLFYA). Asparagine 25, asparagine 81, asparagine 223, and asparagine 279 each carry an N-linked (GlcNAc...) asparagine glycan. Cysteine 475 serves as a coordination point for heme.

This sequence belongs to the cytochrome P450 family. The cofactor is heme.

Its subcellular location is the membrane. The protein operates within secondary metabolite biosynthesis. Functionally, cytochrome P450 monooxygenase that is able to use 4-ethoxybenzoic acid as a substrate for oxidation. In Postia placenta (strain ATCC 44394 / Madison 698-R) (Brown rot fungus), this protein is Cytochrome P450 monooxygenase 69.